The primary structure comprises 250 residues: uncharacterized protein (250 aa).

The NAD(+) site is built by Ser-15, Leu-17, Asp-36, Asp-56, Val-57, and Cys-82. Residue Ser-143 participates in substrate binding. NAD(+) is bound by residues Tyr-156, Lys-160, Phe-189, and Thr-191. The Proton acceptor role is filled by Tyr-156.

The protein belongs to the short-chain dehydrogenases/reductases (SDR) family.

This is an uncharacterized protein from Mycobacterium tuberculosis (strain CDC 1551 / Oshkosh).